A 116-amino-acid chain; its full sequence is Vitelline membrane protein Vm32E (116 aa).

The first 17 residues, 1–17 (MKIVAFTLVAFVALAGA), serve as a signal peptide directing secretion. A VM domain is found at 36–73 (GYPAPPCPTNYLFSCQPNLAPAPCAQEAPAYGSAGAYT).

This sequence belongs to the vitelline membrane family.

It is found in the secreted. Its function is as follows. Major early eggshell protein. This Drosophila santomea (Fruit fly) protein is Vitelline membrane protein Vm32E.